The primary structure comprises 155 residues: Small ribosomal subunit protein uS7cz/uS7cy (155 aa).

The protein belongs to the universal ribosomal protein uS7 family. As to quaternary structure, part of the 30S ribosomal subunit.

It is found in the plastid. It localises to the chloroplast. In terms of biological role, one of the primary rRNA binding proteins, it binds directly to 16S rRNA where it nucleates assembly of the head domain of the 30S subunit. In Amborella trichopoda, this protein is Small ribosomal subunit protein uS7cz/uS7cy (rps7-A).